A 386-amino-acid chain; its full sequence is Alanine racemase (386 aa).

Residue lysine 48 is the Proton acceptor; specific for D-alanine of the active site. Lysine 48 is subject to N6-(pyridoxal phosphate)lysine. Arginine 149 serves as a coordination point for substrate. Tyrosine 278 acts as the Proton acceptor; specific for L-alanine in catalysis. Methionine 326 lines the substrate pocket.

This sequence belongs to the alanine racemase family. Requires pyridoxal 5'-phosphate as cofactor.

It catalyses the reaction L-alanine = D-alanine. It participates in amino-acid biosynthesis; D-alanine biosynthesis; D-alanine from L-alanine: step 1/1. In terms of biological role, catalyzes the interconversion of L-alanine and D-alanine. May also act on other amino acids. This is Alanine racemase (alr) from Nostoc sp. (strain PCC 7120 / SAG 25.82 / UTEX 2576).